The following is a 158-amino-acid chain: MPLTHLNEENQPKMVDIGDKETTERIALASGRISMNKEAYDAIINHGVKKGPVLQTAIIAGIMGAKKTSELIPMCHPIMLNGVDIDILEEKETHSFKLYARVKTQAKTGVEMEALMSVSIGLLTIYDMVKAIDKSMTISGVMLEHKSGGKSGDYNAKK.

Residues 74-76 and 112-113 each bind substrate; these read MCH and ME. Aspartate 127 is an active-site residue.

It belongs to the MoaC family. Homohexamer; trimer of dimers.

It carries out the reaction (8S)-3',8-cyclo-7,8-dihydroguanosine 5'-triphosphate = cyclic pyranopterin phosphate + diphosphate. It participates in cofactor biosynthesis; molybdopterin biosynthesis. Its function is as follows. Catalyzes the conversion of (8S)-3',8-cyclo-7,8-dihydroguanosine 5'-triphosphate to cyclic pyranopterin monophosphate (cPMP). This is Cyclic pyranopterin monophosphate synthase from Helicobacter pylori (strain HPAG1).